Consider the following 239-residue polypeptide: Small ribosomal subunit protein uS3 (239 aa).

A KH type-2 domain is found at 39-109; the sequence is IRAMIQEIPE…KVQIKIKEVK (71 aa). The segment at 219–239 is disordered; that stretch reads GALLKKQRRPRTEKPAQAGRQ.

It belongs to the universal ribosomal protein uS3 family. In terms of assembly, part of the 30S ribosomal subunit. Forms a tight complex with proteins S10 and S14.

Binds the lower part of the 30S subunit head. Binds mRNA in the 70S ribosome, positioning it for translation. The sequence is that of Small ribosomal subunit protein uS3 from Treponema denticola (strain ATCC 35405 / DSM 14222 / CIP 103919 / JCM 8153 / KCTC 15104).